Consider the following 413-residue polypeptide: MEFSERKRSRKSQSFKLVSRDYHHEVYKIPEFSNDVNGEAKETQPIFLGDESMEIKKQITGMRRLLNDSTGRIYQRVGKEGEKLKEEPQDLDLVWPPRLNSSAEAPQSLHPSSRGVWNELPPQSGQFSGQYGTRSRTFQSQPHPTTSSNGELPVVNSSAGSNCCTCNCQSTLQAILQELKTMRKLMQIQAVGTQNRQQPPISLICSQRTAVSRKRNKKKKVPPKTVEPLTVKQKPSGSEMEKKSVVASELSALQAAEHTSPEESRVLGFGIVLESPSSDPEVQLAEGFDVFMPKSQLDSILSNYTRSGSLLFRKLVCAFFDDKTLANSLPNGKRKRGLNDNRKGLDQNIVGAIKVFTEKYCTANHVDKLPGPRDWVQILQDQIKLARRRLKRGSEIADSDERLDGIALPPTVV.

Residues K16, K56, and K85 each participate in a glycyl lysine isopeptide (Lys-Gly) (interchain with G-Cter in SUMO2) cross-link. The segment covering 78–88 (GKEGEKLKEEP) has biased composition (basic and acidic residues). 2 disordered regions span residues 78–153 (GKEG…GELP) and 208–243 (RTAV…MEKK). Polar residues-rich tracts occupy residues 99–111 (LNSS…SLHP) and 121–153 (PPQS…GELP). The span at 211–222 (VSRKRNKKKKVP) shows a compositional bias: basic residues. The span at 223-232 (PKTVEPLTVK) shows a compositional bias: low complexity. K243 participates in a covalent cross-link: Glycyl lysine isopeptide (Lys-Gly) (interchain with G-Cter in SUMO2). The BEN domain maps to 287 to 392 (GFDVFMPKSQ…IKLARRRLKR (106 aa)). Residue T324 is modified to Phosphothreonine. S328 bears the Phosphoserine mark.

In Homo sapiens (Human), this protein is BEN domain-containing protein 7 (BEND7).